A 414-amino-acid chain; its full sequence is Arrestin domain-containing protein 3 (414 aa).

2 consecutive short sequence motifs (PPxY motif) follow at residues 346–349 (PPSY) and 391–394 (PPLY). The interval 393-414 (LYSEIDPNPDQSADDRPSCPSR) is disordered. The segment covering 405 to 414 (ADDRPSCPSR) has biased composition (basic and acidic residues).

It belongs to the arrestin family. As to quaternary structure, interacts (via PPxY motifs) with NEDD4 (via WW domains). Interacts with ADRB2. Interacts with ADRB3. Interacts with HGS (via PPxY motifs). Does not bind TXN (thioredoxin). Interacts with ITCH.

It localises to the cytoplasm. The protein localises to the cell membrane. It is found in the lysosome. The protein resides in the endosome. Its subcellular location is the early endosome. In terms of biological role, adapter protein that plays a role in regulating cell-surface expression of adrenergic receptors and probably also other G protein-coupled receptors. Plays a role in NEDD4-mediated ubiquitination and endocytosis af activated ADRB2 and subsequent ADRB2 degradation. May recruit NEDD4 to ADRB2. Alternatively, may function as adapter protein that does not play a major role in recruiting NEDD4 to ADRB2, but rather plays a role in a targeting ADRB2 to endosomes. The chain is Arrestin domain-containing protein 3 (ARRDC3) from Pongo abelii (Sumatran orangutan).